The sequence spans 181 residues: Oligoribonuclease (181 aa).

The 164-residue stretch at 8–171 folds into the Exonuclease domain; it reads LIWIDLEMTG…DDIRESVAEL (164 aa). The active site involves Y129.

The protein belongs to the oligoribonuclease family.

It is found in the cytoplasm. 3'-to-5' exoribonuclease specific for small oligoribonucleotides. This chain is Oligoribonuclease, found in Salmonella choleraesuis (strain SC-B67).